The following is a 416-amino-acid chain: Serine hydroxymethyltransferase (416 aa).

(6S)-5,6,7,8-tetrahydrofolate-binding positions include Leu121 and 125–127; that span reads GHL. Lys229 is modified (N6-(pyridoxal phosphate)lysine).

Belongs to the SHMT family. As to quaternary structure, homodimer. It depends on pyridoxal 5'-phosphate as a cofactor.

Its subcellular location is the cytoplasm. It carries out the reaction (6R)-5,10-methylene-5,6,7,8-tetrahydrofolate + glycine + H2O = (6S)-5,6,7,8-tetrahydrofolate + L-serine. The protein operates within one-carbon metabolism; tetrahydrofolate interconversion. It participates in amino-acid biosynthesis; glycine biosynthesis; glycine from L-serine: step 1/1. Its function is as follows. Catalyzes the reversible interconversion of serine and glycine with tetrahydrofolate (THF) serving as the one-carbon carrier. This reaction serves as the major source of one-carbon groups required for the biosynthesis of purines, thymidylate, methionine, and other important biomolecules. Also exhibits THF-independent aldolase activity toward beta-hydroxyamino acids, producing glycine and aldehydes, via a retro-aldol mechanism. This is Serine hydroxymethyltransferase from Neisseria gonorrhoeae (strain ATCC 700825 / FA 1090).